Reading from the N-terminus, the 164-residue chain is Peptide deformylase (164 aa).

Fe cation is bound by residues Cys87 and His129. The active site involves Glu130. His133 provides a ligand contact to Fe cation.

The protein belongs to the polypeptide deformylase family. Fe(2+) serves as cofactor.

The catalysed reaction is N-terminal N-formyl-L-methionyl-[peptide] + H2O = N-terminal L-methionyl-[peptide] + formate. Functionally, removes the formyl group from the N-terminal Met of newly synthesized proteins. Requires at least a dipeptide for an efficient rate of reaction. N-terminal L-methionine is a prerequisite for activity but the enzyme has broad specificity at other positions. This chain is Peptide deformylase, found in Thermotoga neapolitana (strain ATCC 49049 / DSM 4359 / NBRC 107923 / NS-E).